Here is a 777-residue protein sequence, read N- to C-terminus: Hepatocyte growth factor-regulated tyrosine kinase substrate (777 aa).

One can recognise a VHS domain in the interval 15–143; sequence ATSQLLLETD…IMKVEGHVFP (129 aa). The segment at 160 to 220 adopts an FYVE-type zinc-finger fold; sequence WVDAEECHRC…VCEPCYEQLN (61 aa). The Zn(2+) site is built by cysteine 166, cysteine 169, cysteine 182, cysteine 185, cysteine 190, and cysteine 193. Position 207 is an N6-acetyllysine (lysine 207). Zn(2+) contacts are provided by cysteine 212 and cysteine 215. The residue at position 216 (tyrosine 216) is a Phosphotyrosine. The tract at residues 223-319 is disordered; it reads AEGKATSTTE…SPVNSSAPLA (97 aa). The interaction with SNX1 stretch occupies residues 225–543; that stretch reads GKATSTTELP…QRLQEQEKER (319 aa). The UIM domain maps to 258 to 277; sequence QEEEELQLALALSQSEAEEK. The segment covering 290–311 has biased composition (low complexity); that stretch reads PKAEPMPSASSAPPASSLYSSP. A phosphotyrosine mark is found at tyrosine 308, tyrosine 329, and tyrosine 334. The segment at 338-407 is disordered; the sequence is KQEEARKSPT…NGESEESHEQ (70 aa). An interaction with SNAP25 and TRAK2 region spans residues 445–543; sequence SINGMHPQLL…QRLQEQEKER (99 aa). The interaction with STAM stretch occupies residues 454-572; it reads LELLNQLDER…FPLPYAQLQA (119 aa). An interaction with NF2 region spans residues 480–777; it reads ARGALSALRE…GSEAQLISFD (298 aa). An N6-succinyllysine modification is found at lysine 551. Residues 718-777 form a disordered region; the sequence is LPSQDASLPPQQPYIAGQQPMYQQMAPSGGPPQQQPPVAQQPQAQGPPAQGSEAQLISFD. The segment covering 753-768 has biased composition (low complexity); sequence PPVAQQPQAQGPPAQG.

Component of the ESCRT-0 complex composed of STAM or STAM2 and HGS. Part of a complex at least composed of HSG, STAM2 (or probably STAM) and EPS15. Interacts with STAM. Interacts with STAM2. Interacts with EPS15; the interaction is direct, calcium-dependent and inhibited by SNAP25. Identified in a complex with STAM and LITAF. Found in a complex with STAM and E3 ligase ITCH and DTX3L. Interacts with E3 ligase DTX3L; the interaction brings together STAM and HSG, promotes their recruitment to early endosomes and decreases STAM and HGS ubiquitination by ITCH. Interacts with NF2; the interaction is direct. Interacts with ubiquitin; the interaction is direct. Interacts with VPS37C. Interacts with SMAD1, SMAD2 and SMAD3. Interacts with TSG101; the interaction mediates the association with the ESCRT-I complex. Interacts with SNAP25; the interaction is direct and decreases with addition of increasing concentrations of free calcium. Interacts with SNX1; the interaction is direct. Component of a 550 kDa membrane complex at least composed of HGS and SNX1 but excluding EGFR. Interacts with TRAK1. Interacts with TRAK2. Component of the CART complex, at least composed of ACTN4, HGS/HRS, MYO5B and TRIM3. Interacts (via UIM domain) with UBQLN1 (via ubiquitin-like domain). Interacts with ARRDC3. Identified in a complex containing at least ARRDC4, AVPR2 and HGS. Interacts with LAPTM4B; promotes HGS ubiquitination. In terms of processing, phosphorylated on Tyr-334. A minor site of phosphorylation on Tyr-329 is detected. Phosphorylation occurs in response to EGF, IL-2, GM-CSF and HGF. Post-translationally, ubiquitinated. Ubiquitinated by ITCH. In terms of tissue distribution, ubiquitous expression in adult and fetal tissues with higher expression in testis and peripheral blood leukocytes.

Its subcellular location is the cytoplasm. The protein resides in the early endosome membrane. The protein localises to the endosome. It is found in the multivesicular body membrane. Involved in intracellular signal transduction mediated by cytokines and growth factors. When associated with STAM, it suppresses DNA signaling upon stimulation by IL-2 and GM-CSF. Could be a direct effector of PI3-kinase in vesicular pathway via early endosomes and may regulate trafficking to early and late endosomes by recruiting clathrin. May concentrate ubiquitinated receptors within clathrin-coated regions. Involved in down-regulation of receptor tyrosine kinase via multivesicular body (MVBs) when complexed with STAM (ESCRT-0 complex). The ESCRT-0 complex binds ubiquitin and acts as a sorting machinery that recognizes ubiquitinated receptors and transfers them to further sequential lysosomal sorting/trafficking processes. May contribute to the efficient recruitment of SMADs to the activin receptor complex. Involved in receptor recycling via its association with the CART complex, a multiprotein complex required for efficient transferrin receptor recycling but not for EGFR degradation. The polypeptide is Hepatocyte growth factor-regulated tyrosine kinase substrate (HGS) (Homo sapiens (Human)).